The sequence spans 287 residues: Ribosomal RNA small subunit methyltransferase A (287 aa).

6 residues coordinate S-adenosyl-L-methionine: asparagine 28, leucine 30, glycine 55, glutamate 77, aspartate 103, and asparagine 123.

Belongs to the class I-like SAM-binding methyltransferase superfamily. rRNA adenine N(6)-methyltransferase family. RsmA subfamily.

It localises to the cytoplasm. It carries out the reaction adenosine(1518)/adenosine(1519) in 16S rRNA + 4 S-adenosyl-L-methionine = N(6)-dimethyladenosine(1518)/N(6)-dimethyladenosine(1519) in 16S rRNA + 4 S-adenosyl-L-homocysteine + 4 H(+). In terms of biological role, specifically dimethylates two adjacent adenosines (A1518 and A1519) in the loop of a conserved hairpin near the 3'-end of 16S rRNA in the 30S particle. May play a critical role in biogenesis of 30S subunits. This is Ribosomal RNA small subunit methyltransferase A from Rhodopseudomonas palustris (strain TIE-1).